A 225-amino-acid chain; its full sequence is UPF0758 protein Sama_0327 (225 aa).

Positions 102–224 (VLTSPDLTRD…IVSFAERGWI (123 aa)) constitute an MPN domain. 3 residues coordinate Zn(2+): histidine 173, histidine 175, and aspartate 186. Positions 173–186 (HNHPSGVAEPSQAD) match the JAMM motif motif.

This sequence belongs to the UPF0758 family.

This is UPF0758 protein Sama_0327 from Shewanella amazonensis (strain ATCC BAA-1098 / SB2B).